A 340-amino-acid polypeptide reads, in one-letter code: Armadillo repeat-containing protein 12 (340 aa).

Residues 1 to 101 (MGKSIPQYLG…SITRCVYLLE (101 aa)) are interaction with TBC1D15. 3 ARM repeats span residues 100 to 139 (LEAEASACTTDDIVLLGYMLDDKDNSVKTQALNTLKAFSG), 179 to 218 (LPDYVHPQLRRVMPALMEILQSDYILAQVQAVRLLSYLAQ), and 278 to 318 (SLHE…SLQY).

In terms of assembly, interacts with TBC1D15, TBC1D21, GK2 and IMMT. Interacts with VDAC2 and VDAC3 in a TBC1D21-dependent manner. Interacts (via ARM domains) with RBBP4. Expressed in testis. Highly expressed in the mid-piece of the elongated and late spermatids. Expressed at higher levels in neuroblastoma tissues and cell lines, than those of normal dorsal ganglia (at protein level). Expressed in breast cancer, colon cancer, hepatocellular carcinoma, lung cancer, pancreas cancer, prostate cancer, renal cancer and gastric cancer, but not in their normal counterparts.

It is found in the nucleus. Its subcellular location is the mitochondrion outer membrane. Essential for male fertility and sperm mitochondrial sheath formation. Required for proper mitochondrial elongation and coiling along the flagellum during the formation of the mitochondrial sheath. Facilitates the growth and aggressiveness of neuroblastoma cells. Increases the EZH2 activity and H3K27me3 levels in a RBBP4-dependent manner, and facilitates the enrichment of polycomb repressive complex 2 and H3K27me3 on gene promoters, resulting in transcriptional repression of tumor suppressors affecting the proliferation, invasion, and metastasis of tumor cells. This Homo sapiens (Human) protein is Armadillo repeat-containing protein 12 (ARMC12).